The sequence spans 471 residues: Isochorismate synthase MenF (471 aa).

Lys226 serves as the catalytic Proton acceptor. The Proton donor role is filled by Glu275. Glu319 and Glu454 together coordinate Mg(2+).

It belongs to the isochorismate synthase family. Mg(2+) is required as a cofactor.

The enzyme catalyses chorismate = isochorismate. It participates in quinol/quinone metabolism; 1,4-dihydroxy-2-naphthoate biosynthesis; 1,4-dihydroxy-2-naphthoate from chorismate: step 1/7. The protein operates within quinol/quinone metabolism; menaquinone biosynthesis. Catalyzes the conversion of chorismate to isochorismate. The chain is Isochorismate synthase MenF from Bacillus subtilis (strain 168).